The chain runs to 208 residues: Holliday junction branch migration complex subunit RuvA (208 aa).

The interval 1-67 is domain I; it reads MIGWLHGTIG…EDGQQLYGFE (67 aa). A domain II region spans residues 68-146; that stretch reads TKADRNLFRL…ERWQQQGGST (79 aa). A flexible linker region spans residues 147–157; the sequence is PLRLVEPVAES. Positions 157-208 are domain III; that stretch reads SRELRATLEALGYGPEEVSAAVAQAGSQGLDPEQPMEEWLRHCLAWLSRQAG.

The protein belongs to the RuvA family. In terms of assembly, homotetramer. Forms an RuvA(8)-RuvB(12)-Holliday junction (HJ) complex. HJ DNA is sandwiched between 2 RuvA tetramers; dsDNA enters through RuvA and exits via RuvB. An RuvB hexamer assembles on each DNA strand where it exits the tetramer. Each RuvB hexamer is contacted by two RuvA subunits (via domain III) on 2 adjacent RuvB subunits; this complex drives branch migration. In the full resolvosome a probable DNA-RuvA(4)-RuvB(12)-RuvC(2) complex forms which resolves the HJ.

The protein resides in the cytoplasm. Its function is as follows. The RuvA-RuvB-RuvC complex processes Holliday junction (HJ) DNA during genetic recombination and DNA repair, while the RuvA-RuvB complex plays an important role in the rescue of blocked DNA replication forks via replication fork reversal (RFR). RuvA specifically binds to HJ cruciform DNA, conferring on it an open structure. The RuvB hexamer acts as an ATP-dependent pump, pulling dsDNA into and through the RuvAB complex. HJ branch migration allows RuvC to scan DNA until it finds its consensus sequence, where it cleaves and resolves the cruciform DNA. The chain is Holliday junction branch migration complex subunit RuvA from Synechococcus sp. (strain RCC307).